The chain runs to 224 residues: UPF0758 protein NE1464 (224 aa).

The region spanning 102–224 (IMDSPQSVRN…VVSFAERGLI (123 aa)) is the MPN domain. Zn(2+) is bound by residues His-173, His-175, and Asp-186. The JAMM motif motif lies at 173–186 (HNHPSGIAEPSTAD).

Belongs to the UPF0758 family.

This is UPF0758 protein NE1464 from Nitrosomonas europaea (strain ATCC 19718 / CIP 103999 / KCTC 2705 / NBRC 14298).